A 481-amino-acid polypeptide reads, in one-letter code: MQWEVVIGLEIHTQLSTQSKIFSGSATTFGSEPNTQASLVDLGMPGVLPVLNKEAVRMAVKFGLAVNAEIGQHNVFARKNYFYPDLPKGYQISQMELPIVGKGHLDIPLEDGTVKRIGITRAHLEEDAGKSLHEDFQGMTGIDLNRAGTPLLEIVSEPDMRNAKEAVAYVKAIHAIVRYLGICDGNMAEGSLRCDCNVSIRPKGQVEFGTRCEIKNVNSFRFIEKAINSEIQRQIDLIEDGGKVIQQTRLYDPNTNETRAMRSKEEANDYRYFPDPDLLPVIIEDSFLEETRATLPELPPQKRERFQSQFGLSTYDASVLASSREQADYFEQVVSISGDAKLAANWVMVELGSLLNKQGLEIDQSPVSAEQLGGMLKRITDNTISGKIAKMVFEAMANGEGSADEVIEKRGLKQVTDSGAIESMLDEVLAANAEQVEQYRAADEAKRGKMFGFFVGQAMKASKGKANPQQVNELLKAKLEG.

It belongs to the GatB/GatE family. GatB subfamily. As to quaternary structure, heterotrimer of A, B and C subunits.

It catalyses the reaction L-glutamyl-tRNA(Gln) + L-glutamine + ATP + H2O = L-glutaminyl-tRNA(Gln) + L-glutamate + ADP + phosphate + H(+). It carries out the reaction L-aspartyl-tRNA(Asn) + L-glutamine + ATP + H2O = L-asparaginyl-tRNA(Asn) + L-glutamate + ADP + phosphate + 2 H(+). Its function is as follows. Allows the formation of correctly charged Asn-tRNA(Asn) or Gln-tRNA(Gln) through the transamidation of misacylated Asp-tRNA(Asn) or Glu-tRNA(Gln) in organisms which lack either or both of asparaginyl-tRNA or glutaminyl-tRNA synthetases. The reaction takes place in the presence of glutamine and ATP through an activated phospho-Asp-tRNA(Asn) or phospho-Glu-tRNA(Gln). In Pseudomonas syringae pv. syringae (strain B728a), this protein is Aspartyl/glutamyl-tRNA(Asn/Gln) amidotransferase subunit B.